We begin with the raw amino-acid sequence, 83 residues long: Bowman-Birk type seed trypsin and chymotrypsin inhibitor (83 aa).

7 disulfide bridges follow: C18–C72, C19–C34, C22–C68, C24–C32, C42–C49, C46–C61, and C51–C59.

The protein belongs to the Bowman-Birk serine protease inhibitor family.

The sequence is that of Bowman-Birk type seed trypsin and chymotrypsin inhibitor from Vigna unguiculata (Cowpea).